A 126-amino-acid chain; its full sequence is Aspartate 1-decarboxylase (126 aa).

Serine 25 (schiff-base intermediate with substrate; via pyruvic acid) is an active-site residue. The residue at position 25 (serine 25) is a Pyruvic acid (Ser). Position 57 (threonine 57) interacts with substrate. Tyrosine 58 acts as the Proton donor in catalysis. A substrate-binding site is contributed by 73-75 (GGA).

It belongs to the PanD family. As to quaternary structure, heterooctamer of four alpha and four beta subunits. Pyruvate serves as cofactor. Is synthesized initially as an inactive proenzyme, which is activated by self-cleavage at a specific serine bond to produce a beta-subunit with a hydroxyl group at its C-terminus and an alpha-subunit with a pyruvoyl group at its N-terminus.

The protein localises to the cytoplasm. The catalysed reaction is L-aspartate + H(+) = beta-alanine + CO2. It functions in the pathway cofactor biosynthesis; (R)-pantothenate biosynthesis; beta-alanine from L-aspartate: step 1/1. Functionally, catalyzes the pyruvoyl-dependent decarboxylation of aspartate to produce beta-alanine. The protein is Aspartate 1-decarboxylase of Stenotrophomonas maltophilia (strain K279a).